A 132-amino-acid polypeptide reads, in one-letter code: Fatty acid-binding protein, brain (132 aa).

V2 is subject to N-acetylvaline. 127–129 (RHY) lines the a fatty acid pocket.

The protein belongs to the calycin superfamily. Fatty-acid binding protein (FABP) family.

The protein localises to the cytoplasm. Functionally, FABPs are thought to play a role in the intracellular transport of long-chain fatty acids and their acyl-CoA esters. This is Fatty acid-binding protein, brain (FABP7) from Gallus gallus (Chicken).